A 230-amino-acid chain; its full sequence is Potassium/proton antiporter CemA (230 aa).

A run of 4 helical transmembrane segments spans residues 7 to 27, 106 to 126, 145 to 165, and 181 to 201; these read LPSL…SSSF, IILH…SFFL, LNDS…VGFH, and FGWA…PVIL.

The protein belongs to the CemA family.

Its subcellular location is the plastid. The protein localises to the chloroplast inner membrane. It catalyses the reaction K(+)(in) + H(+)(out) = K(+)(out) + H(+)(in). Contributes to K(+)/H(+) antiport activity by supporting proton efflux to control proton extrusion and homeostasis in chloroplasts in a light-dependent manner to modulate photosynthesis. Prevents excessive induction of non-photochemical quenching (NPQ) under continuous-light conditions. Indirectly promotes efficient inorganic carbon uptake into chloroplasts. The protein is Potassium/proton antiporter CemA of Hordeum vulgare (Barley).